The primary structure comprises 200 residues: UPF0316 protein SACOL1973 (200 aa).

The next 3 helical transmembrane spans lie at 8–28 (PWLM…FLTM), 40–60 (IAAS…GLVM), and 66–86 (IQNI…GMKI).

Belongs to the UPF0316 family.

The protein localises to the cell membrane. The sequence is that of UPF0316 protein SACOL1973 from Staphylococcus aureus (strain COL).